Here is a 93-residue protein sequence, read N- to C-terminus: Large ribosomal subunit protein uL23cz/uL23cy (93 aa).

This sequence belongs to the universal ribosomal protein uL23 family. In terms of assembly, part of the 50S ribosomal subunit.

It is found in the plastid. It localises to the chloroplast. Functionally, binds to 23S rRNA. This chain is Large ribosomal subunit protein uL23cz/uL23cy (rpl23-A), found in Coffea arabica (Arabian coffee).